Reading from the N-terminus, the 88-residue chain is YcgL domain-containing protein CGSHiGG_01115 (88 aa).

The 85-residue stretch at 1–85 folds into the YcgL domain; it reads MLCAIYKSKK…QDDGLFNSLS (85 aa).

This chain is YcgL domain-containing protein CGSHiGG_01115, found in Haemophilus influenzae (strain PittGG).